Here is a 435-residue protein sequence, read N- to C-terminus: GTPase Der (435 aa).

EngA-type G domains lie at 4 to 167 (PTLA…PSED) and 175 to 350 (IKFS…ENQT). Residues 10–17 (GRPNVGKS), 57–61 (DTGGI), 119–122 (NKVD), 181–188 (GRPNVGKS), 228–232 (DTAGI), and 293–296 (NKWD) contribute to the GTP site. In terms of domain architecture, KH-like spans 351-435 (RRIQSSVLND…PIHIIARKRK (85 aa)).

Belongs to the TRAFAC class TrmE-Era-EngA-EngB-Septin-like GTPase superfamily. EngA (Der) GTPase family. In terms of assembly, associates with the 50S ribosomal subunit.

Its function is as follows. GTPase that plays an essential role in the late steps of ribosome biogenesis. The polypeptide is GTPase Der (Lacticaseibacillus paracasei (strain ATCC 334 / BCRC 17002 / CCUG 31169 / CIP 107868 / KCTC 3260 / NRRL B-441) (Lactobacillus paracasei)).